Here is a 188-residue protein sequence, read N- to C-terminus: Peptidyl-tRNA hydrolase (188 aa).

Phenylalanine 15 lines the tRNA pocket. Histidine 20 acts as the Proton acceptor in catalysis. Residues tyrosine 64, asparagine 66, and asparagine 112 each contribute to the tRNA site.

Belongs to the PTH family. In terms of assembly, monomer.

The protein localises to the cytoplasm. It carries out the reaction an N-acyl-L-alpha-aminoacyl-tRNA + H2O = an N-acyl-L-amino acid + a tRNA + H(+). In terms of biological role, hydrolyzes ribosome-free peptidyl-tRNAs (with 1 or more amino acids incorporated), which drop off the ribosome during protein synthesis, or as a result of ribosome stalling. Catalyzes the release of premature peptidyl moieties from peptidyl-tRNA molecules trapped in stalled 50S ribosomal subunits, and thus maintains levels of free tRNAs and 50S ribosomes. This chain is Peptidyl-tRNA hydrolase, found in Borrelia turicatae (strain 91E135).